Consider the following 286-residue polypeptide: Phosphoribosylaminoimidazole-succinocarboxamide synthase (286 aa).

The protein belongs to the SAICAR synthetase family.

The catalysed reaction is 5-amino-1-(5-phospho-D-ribosyl)imidazole-4-carboxylate + L-aspartate + ATP = (2S)-2-[5-amino-1-(5-phospho-beta-D-ribosyl)imidazole-4-carboxamido]succinate + ADP + phosphate + 2 H(+). It functions in the pathway purine metabolism; IMP biosynthesis via de novo pathway; 5-amino-1-(5-phospho-D-ribosyl)imidazole-4-carboxamide from 5-amino-1-(5-phospho-D-ribosyl)imidazole-4-carboxylate: step 1/2. In Pasteurella multocida (strain Pm70), this protein is Phosphoribosylaminoimidazole-succinocarboxamide synthase (purC).